Consider the following 127-residue polypeptide: Small ribosomal subunit protein uS11 (127 aa).

The protein belongs to the universal ribosomal protein uS11 family. As to quaternary structure, part of the 30S ribosomal subunit. Interacts with proteins S7 and S18. Binds to IF-3.

Located on the platform of the 30S subunit, it bridges several disparate RNA helices of the 16S rRNA. Forms part of the Shine-Dalgarno cleft in the 70S ribosome. The chain is Small ribosomal subunit protein uS11 from Chlorobaculum tepidum (strain ATCC 49652 / DSM 12025 / NBRC 103806 / TLS) (Chlorobium tepidum).